The chain runs to 186 residues: Elongation factor P (186 aa).

It belongs to the elongation factor P family.

The protein localises to the cytoplasm. The protein operates within protein biosynthesis; polypeptide chain elongation. In terms of biological role, involved in peptide bond synthesis. Stimulates efficient translation and peptide-bond synthesis on native or reconstituted 70S ribosomes in vitro. Probably functions indirectly by altering the affinity of the ribosome for aminoacyl-tRNA, thus increasing their reactivity as acceptors for peptidyl transferase. This is Elongation factor P from Shewanella sp. (strain ANA-3).